Here is a 598-residue protein sequence, read N- to C-terminus: Pentatricopeptide repeat-containing protein At5g14820, mitochondrial (598 aa).

The N-terminal 98 residues, 1–98 (MAAAPWLYLS…RGFSSGSSNV (98 aa)), are a transit peptide targeting the mitochondrion. 10 PPR repeats span residues 193–227 (DSRT…GLLT), 229–261 (ETFT…KFKI), 262–292 (GVET…LKER), 296–330 (NMMT…GLKP), 331–365 (DIVA…GPCP), 366–400 (NVRS…GLQP), 401–435 (DAAV…GHPP), 436–470 (DGKT…EIEP), 471–505 (SIHT…GICP), and 506–540 (DDNS…GMKT).

This sequence belongs to the PPR family. P subfamily.

The protein resides in the mitochondrion. This Arabidopsis thaliana (Mouse-ear cress) protein is Pentatricopeptide repeat-containing protein At5g14820, mitochondrial.